We begin with the raw amino-acid sequence, 666 residues long: Endogenous retrovirus group K member 7 Gag polyprotein (666 aa).

The N-myristoyl glycine moiety is linked to residue glycine 2. Disordered regions lie at residues glycine 165–glutamine 205 and glutamate 217–leucine 264. Residues glycine 232 to proline 247 are compositionally biased toward pro residues. CCHC-type zinc fingers lie at residues glycine 544–valine 561 and aspartate 580–serine 597. The tract at residues lysine 598–leucine 641 is disordered. Over residues glutamine 604 to glycine 622 the composition is skewed to polar residues.

It belongs to the beta type-B retroviral Gag protein family. HERV class-II K(HML-2) gag subfamily. Specific enzymatic cleavages may yield mature proteins. Post-translationally, myristoylation is essential for retroviral assembly. Alteration of the glycine residue leads to a block in the budding of particles and an accumulation of Gag inside the cell.

Its subcellular location is the cell membrane. In terms of biological role, the products of the Gag polyproteins of infectious retroviruses perform highly complex orchestrated tasks during the assembly, budding, maturation, and infection stages of the viral replication cycle. During viral assembly, the proteins form membrane associations and self-associations that ultimately result in budding of an immature virion from the infected cell. Gag precursors also function during viral assembly to selectively bind and package two plus strands of genomic RNA. Endogenous Gag proteins may have kept, lost or modified their original function during evolution. The chain is Endogenous retrovirus group K member 7 Gag polyprotein (ERVK-7) from Homo sapiens (Human).